The primary structure comprises 358 residues: Alternative oxidase, mitochondrial (358 aa).

The helical transmembrane segment at 152–172 (LIRYVFLESVAGVPGMVAGML) threads the bilayer. Fe cation contacts are provided by glutamate 159, glutamate 198, and histidine 201. Residues 218–238 (MILGAQGVFFNSFFLCYLFSP) traverse the membrane as a helical segment. Fe cation is bound by residues glutamate 249, glutamate 306, and histidine 309.

Belongs to the alternative oxidase family. Fe cation is required as a cofactor.

Its subcellular location is the mitochondrion inner membrane. Functionally, catalyzes cyanide-resistant oxygen consumption. May increase respiration when the cytochrome respiratory pathway is restricted, or in response to low temperatures. The polypeptide is Alternative oxidase, mitochondrial (AOX1) (Monilinia fructicola (Brown rot fungus)).